Consider the following 94-residue polypeptide: Selenoprotein K (94 aa).

Residues 20–42 (LSLITDFFWGIAEFVVLFFKTLL) form a helical membrane-spanning segment. A disordered region spans residues 48–94 (KRRSYGNSSDSRYDDGRGPPGNPPRRMGRINHLRGPSPPPMAGGUGR). Residue selenocysteine 92 is a non-standard amino acid, selenocysteine.

The protein belongs to the selenoprotein K family. As to quaternary structure, interacts with DERL1, DERL2, DERL3 and SELENOS. The SELENOK-SELENOS complex interacts with VCP. Interacts with ZDHHC6. In terms of processing, cleaved by CAPN2/m-calpain in resting macrophages but not in activated macrophages. Macrophage activation up-regulates expression of the calpain inhibitor CAST/calpastatin, resulting in inhibition of CAPN2 activity. Post-translationally, truncated SELENOK proteins produced by failed UGA/Sec decoding are ubiquitinated by the CRL2(KLHDC2) complex, which recognizes the diglycine (Gly-Gly) at the C-terminus of truncated SELENOK proteins. As to expression, highly expressed in heart.

It is found in the endoplasmic reticulum membrane. Its subcellular location is the cell membrane. Its function is as follows. Required for Ca(2+) flux in immune cells and plays a role in T-cell proliferation and in T-cell and neutrophil migration. Involved in endoplasmic reticulum-associated degradation (ERAD) of soluble glycosylated proteins. Required for palmitoylation and cell surface expression of CD36 and involved in macrophage uptake of low-density lipoprotein and in foam cell formation. Together with ZDHHC6, required for palmitoylation of ITPR1 in immune cells, leading to regulate ITPR1 stability and function. Plays a role in protection of cells from ER stress-induced apoptosis. Protects cells from oxidative stress when overexpressed in cardiomyocytes. The chain is Selenoprotein K from Homo sapiens (Human).